A 141-amino-acid polypeptide reads, in one-letter code: Large ribosomal subunit protein uL11 (141 aa).

It belongs to the universal ribosomal protein uL11 family. Part of the ribosomal stalk of the 50S ribosomal subunit. Interacts with L10 and the large rRNA to form the base of the stalk. L10 forms an elongated spine to which L12 dimers bind in a sequential fashion forming a multimeric L10(L12)X complex. Post-translationally, one or more lysine residues are methylated.

Forms part of the ribosomal stalk which helps the ribosome interact with GTP-bound translation factors. The sequence is that of Large ribosomal subunit protein uL11 from Chlorobium luteolum (strain DSM 273 / BCRC 81028 / 2530) (Pelodictyon luteolum).